The primary structure comprises 368 residues: Alanine racemase (368 aa).

Lys-40 (proton acceptor; specific for D-alanine) is an active-site residue. N6-(pyridoxal phosphate)lysine is present on Lys-40. Arg-134 provides a ligand contact to substrate. The active-site Proton acceptor; specific for L-alanine is the Tyr-263. Met-310 contacts substrate.

The protein belongs to the alanine racemase family. Requires pyridoxal 5'-phosphate as cofactor.

The catalysed reaction is L-alanine = D-alanine. It participates in amino-acid biosynthesis; D-alanine biosynthesis; D-alanine from L-alanine: step 1/1. Functionally, catalyzes the interconversion of L-alanine and D-alanine. May also act on other amino acids. The sequence is that of Alanine racemase (alr) from Listeria monocytogenes serotype 4b (strain CLIP80459).